Reading from the N-terminus, the 699-residue chain is MNPIVKSFEYGQHTVTLETGVIARQADAAVLASMGDTTVLVTVVGKKEAEAGRDFFPLTVNYQEKTYAAGKIPGGFFKREGRPSEDETLIARLIDRPIRPLFPNGFTNEVQVIITVVSVDPQIEPDIISMIGTSAALAISGIPFSGPLGAARVGYINGEYVLNPTVTQLESSQLNLVVAGTESAVLMVESEAQALPEEVMLGSVVYGHDQQQVVIKAIAEFKAEAGKPAWNWTAPVANEALVAQVKELAEDGLAQAYQIQVKQDRYAQVAVVKAAAKEALLAANPDVDLREVDGLLGSLEKKVVRGRIIRGEPRIDGREPDMVRALSVLAGVLPRTHGSALFTRGETQALVTCTLGTERDAQKIDSIMGERTNRFMLHYNFPPYSVGETGMVGSPKRREIGHGKLAWRGINAVMPTAEEFPYSVRVVSEITESNGSSSMASVCGTSLALMDAGVPIKTSVAGIAMGLVKEGDNFVVLSDILGDEDHLGDMDFKVAGTRDGVTALQMDIKIEGITKEIMEIALQQAYGARVHILNVMDQAIGSHRDDISDHAPRITTIKINPEKIRDVIGKGGAVIRALTEETGTTIELEDDGTVKIASSNGDATREAIRRIEEITSEVEVGRIYNGKVIRIVDFGAFVNILPGKDGLVHISQISDERVANVSDHLELNQEVTVKVMEVDRQGRVRLSIKEAQTKEAAAE.

Residues Asp485 and Asp491 each contribute to the Mg(2+) site. The KH domain maps to 552–611; sequence PRITTIKINPEKIRDVIGKGGAVIRALTEETGTTIELEDDGTVKIASSNGDATREAIRRI. One can recognise an S1 motif domain in the interval 621-689; the sequence is GRIYNGKVIR…RQGRVRLSIK (69 aa).

The protein belongs to the polyribonucleotide nucleotidyltransferase family. Component of the RNA degradosome, which is a multiprotein complex involved in RNA processing and mRNA degradation. It depends on Mg(2+) as a cofactor.

It is found in the cytoplasm. It catalyses the reaction RNA(n+1) + phosphate = RNA(n) + a ribonucleoside 5'-diphosphate. Involved in mRNA degradation. Catalyzes the phosphorolysis of single-stranded polyribonucleotides processively in the 3'- to 5'-direction. The chain is Polyribonucleotide nucleotidyltransferase from Shewanella sp. (strain ANA-3).